The sequence spans 359 residues: Peptide chain release factor 1 (359 aa).

Q235 bears the N5-methylglutamine mark.

It belongs to the prokaryotic/mitochondrial release factor family. Methylated by PrmC. Methylation increases the termination efficiency of RF1.

The protein localises to the cytoplasm. In terms of biological role, peptide chain release factor 1 directs the termination of translation in response to the peptide chain termination codons UAG and UAA. The polypeptide is Peptide chain release factor 1 (Chelativorans sp. (strain BNC1)).